The chain runs to 192 residues: UPF0312 protein YPK_1931 (192 aa).

Positions 1 to 23 (MINKTLLGLSLGALMFTAGSAVA) are cleaved as a signal peptide.

This sequence belongs to the UPF0312 family. Type 1 subfamily.

It is found in the periplasm. This is UPF0312 protein YPK_1931 from Yersinia pseudotuberculosis serotype O:3 (strain YPIII).